A 250-amino-acid chain; its full sequence is Protein orai-2 (250 aa).

A run of 4 helical transmembrane segments spans residues 66–83 (TSAL…EVQL), 94–114 (LIAF…ALLI), 148–168 (LAWG…VVLL), and 192–212 (AALV…VFTI).

Belongs to the Orai family. As to quaternary structure, oligomerizes in homomeric and heteromeric ORAI complexes. Native CRAC channels most likely consist of hexameric ORAI heteromers, implying that diverse ORAI1, ORAI2 and ORAI3 subunit combinations with distinct biophysical properties can operate in a cell-type specific way. Interacts with STIM1; this regulates channel activity. Interacts with CRACR2A/EFCAB4B.

It is found in the cell membrane. The catalysed reaction is Ca(2+)(in) = Ca(2+)(out). With respect to regulation, CRAC channels are regulated by fast Ca(2+)-dependent inactivation (FCDI), a mechanism that limits Ca(2+) influx and cell toxicity. ORAI2 channels display prominent FCDI. Inhibited by lanthanides such as Gd(3+) ions. In terms of biological role, pore-forming subunit of inward rectifying Ca(2+) release-activated Ca(2+) (CRAC) channels. Assembles with ORAI1 and ORAI3 to form hexameric CRAC channels that mediate Ca(2+) influx upon depletion of endoplasmic reticulum Ca(2+) store and channel activation by Ca(2+) sensor STIM1, a process known as store-operated Ca(2+) entry (SOCE). Various pore subunit combinations may account for distinct CRAC channel spatiotemporal and cell-type specific dynamics. ORAI1 mainly contributes to the generation of Ca(2+) plateaus involved in sustained Ca(2+) entry and is dispensable for cytosolic Ca(2+) oscillations, whereas ORAI2 and ORAI3 generate oscillatory patterns. CRAC channels assemble in Ca(2+) signaling microdomains where Ca(2+) influx is coupled to calmodulin and calcineurin signaling and activation of NFAT transcription factors recruited to ORAI1 via AKAP5. CRAC channels are the main pathway for Ca(2+) influx in T cells and promote the immune response to pathogens by activating NFAT-dependent cytokine and chemokine transcription. This is Protein orai-2 (Orai2) from Mus musculus (Mouse).